A 102-amino-acid polypeptide reads, in one-letter code: NADH-quinone oxidoreductase subunit K (102 aa).

The next 3 membrane-spanning stretches (helical) occupy residues 5 to 25, 31 to 51, and 62 to 82; these read LGHF…GIFL, IVLL…FVAF, and VFVF…LAIL.

Belongs to the complex I subunit 4L family. As to quaternary structure, NDH-1 is composed of 14 different subunits. Subunits NuoA, H, J, K, L, M, N constitute the membrane sector of the complex.

The protein resides in the cell inner membrane. It catalyses the reaction a quinone + NADH + 5 H(+)(in) = a quinol + NAD(+) + 4 H(+)(out). Functionally, NDH-1 shuttles electrons from NADH, via FMN and iron-sulfur (Fe-S) centers, to quinones in the respiratory chain. The immediate electron acceptor for the enzyme in this species is believed to be ubiquinone. Couples the redox reaction to proton translocation (for every two electrons transferred, four hydrogen ions are translocated across the cytoplasmic membrane), and thus conserves the redox energy in a proton gradient. The polypeptide is NADH-quinone oxidoreductase subunit K (Paracidovorax citrulli (strain AAC00-1) (Acidovorax citrulli)).